Reading from the N-terminus, the 933-residue chain is Exosome complex exonuclease RRP44 homolog A (933 aa).

The region spanning 50-163 (KIIVVDTNVV…LVTNDRENKR (114 aa)) is the PINc domain. In terms of domain architecture, CSD1 spans 217-321 (QEHKPMSEIT…NVDDAPRTSN (105 aa)). Positions 296–336 (AEEDDEEDDTVHLAPDNVDDAPRTSNLSHETSGDKNAAPVR) are disordered. Positions 371–438 (ALFVSKDRRI…ETEVVLIEND (68 aa)) constitute a CSD2 domain. The 330-residue stretch at 469–798 (RQDLRHLLVF…FVHRLLAASL (330 aa)) folds into the RNB domain. Residues aspartate 481 and aspartate 490 each contribute to the Mg(2+) site.

Belongs to the RNR ribonuclease family. As to quaternary structure, probable component of the RNA exosome complex. The cofactor is Mg(2+).

Its subcellular location is the nucleus. Catalytic component of the RNA exosome complex which has 3'-&gt;5' exoribonuclease activity and participates in a multitude of cellular RNA processing and degradation events. Required for 5.8S rRNA intermediate processing and the degradation of 5' external transcribed spacer (5' ETS), a maturation by-product of rRNA synthesis. Is not involved in the degradation of turnip crinkle virus (TCV) RNA and significant virus resistance. Required for normal development of female gametophytes and early embryogenesis. This is Exosome complex exonuclease RRP44 homolog A from Arabidopsis thaliana (Mouse-ear cress).